Reading from the N-terminus, the 437-residue chain is MSMFLDTAKIKVKAGKGGDGMVAFRREKYVPNGGPWGGDGGHGGNVVFVVDEGLRTLMDFRYNRRFKADDGEKGMTKGMHGRGAEDLIVRVPQGTTVRDADTGKIITDLVENGQEFVIAHGGRGGRGNIRFATPKNPAPEISENGEPGEERNLELELKVLADVGLVGFPSVGKSTLLSVITAAKPKIGAYHFTTIVPNLGMVRTKSGESFAVADLPGLIEGASQGVGLGTQFLRHIERTRVILHVLDMSASEGRDPYEDYVAINNELETYNLRLMERPQIIVANKMDMPEAEEHLEEFKKKLATNYDEFEELPQIFPISGIAHQGLENLLEATAELLEKTPEFLLYDESDFQEEEAYYGFNPDEPEFAISRADDASWILSGDKLEKLFTMTNFDRDESVMKFARQLRGMGVDEALRARGAKDGDIVRIGKFEFEFVD.

The 159-residue stretch at 2-160 (SMFLDTAKIK…RNLELELKVL (159 aa)) folds into the Obg domain. One can recognise an OBG-type G domain in the interval 161 to 338 (ADVGLVGFPS…LLEATAELLE (178 aa)). GTP is bound by residues 167 to 174 (GFPSVGKS), 192 to 196 (FTTIV), 214 to 217 (DLPG), 284 to 287 (NKMD), and 319 to 321 (SGI). S174 and T194 together coordinate Mg(2+). The 79-residue stretch at 359–437 (GFNPDEPEFA…IGKFEFEFVD (79 aa)) folds into the OCT domain.

It belongs to the TRAFAC class OBG-HflX-like GTPase superfamily. OBG GTPase family. As to quaternary structure, monomer. Mg(2+) serves as cofactor.

Its subcellular location is the cytoplasm. Its function is as follows. An essential GTPase which binds GTP, GDP and possibly (p)ppGpp with moderate affinity, with high nucleotide exchange rates and a fairly low GTP hydrolysis rate. Plays a role in control of the cell cycle, stress response, ribosome biogenesis and in those bacteria that undergo differentiation, in morphogenesis control. This is GTPase Obg from Streptococcus suis (strain 98HAH33).